The sequence spans 738 residues: Translation initiation factor IF-2 (738 aa).

The segment covering 1-10 has biased composition (polar residues); it reads MNSMRISGHQ. The interval 1-150 is disordered; the sequence is MNSMRISGHQ…PTTVRAPVRP (150 aa). Positions 22–102 are enriched in gly residues; sequence AGGGRGPGNP…GGRGPSGGRG (81 aa). Residues 103–120 are compositionally biased toward basic and acidic residues; it reads GDGRRREESPTDHEDGRI. Over residues 121 to 143 the composition is skewed to low complexity; it reads NRSGRSTSTTTTRTSSTLARPTT. In terms of domain architecture, tr-type G spans 238-405; it reads PRPPVVTIMG…MILLVADLNE (168 aa). Residues 247-254 are G1; the sequence is GHVDHGKT. 247-254 serves as a coordination point for GTP; the sequence is GHVDHGKT. The G2 stretch occupies residues 272 to 276; it reads GITQH. Residues 293 to 296 are G3; it reads DTPG. GTP-binding positions include 293 to 297 and 347 to 350; these read DTPGH and NKID. The segment at 347–350 is G4; it reads NKID. Residues 383–385 form a G5 region; it reads SAK.

This sequence belongs to the TRAFAC class translation factor GTPase superfamily. Classic translation factor GTPase family. IF-2 subfamily.

Its subcellular location is the cytoplasm. Functionally, one of the essential components for the initiation of protein synthesis. Protects formylmethionyl-tRNA from spontaneous hydrolysis and promotes its binding to the 30S ribosomal subunits. Also involved in the hydrolysis of GTP during the formation of the 70S ribosomal complex. In Roseiflexus castenholzii (strain DSM 13941 / HLO8), this protein is Translation initiation factor IF-2.